A 169-amino-acid polypeptide reads, in one-letter code: uncharacterized protein (169 aa).

The transit peptide at 1–91 directs the protein to the mitochondrion; the sequence is MFSSTFRRLA…NKEQYTVRCL (91 aa). Positions 54–76 are disordered; sequence PQPKSPGSLPSSTRTAPNPNGEE. The segment covering 61 to 71 has biased composition (polar residues); the sequence is SLPSSTRTAPN.

It is found in the mitochondrion. This is an uncharacterized protein from Trypanosoma brucei brucei (strain 927/4 GUTat10.1).